Here is a 328-residue protein sequence, read N- to C-terminus: NADH-quinone oxidoreductase subunit H (328 aa).

8 consecutive transmembrane segments (helical) span residues Ile10–Phe30, Ile80–Pro100, Ile118–Gly138, Ala155–Val175, Ile191–Phe211, Leu243–Phe263, Leu272–Thr292, and Trp306–Val326.

This sequence belongs to the complex I subunit 1 family. In terms of assembly, NDH-1 is composed of 14 different subunits. Subunits NuoA, H, J, K, L, M, N constitute the membrane sector of the complex.

It is found in the cell inner membrane. The enzyme catalyses a quinone + NADH + 5 H(+)(in) = a quinol + NAD(+) + 4 H(+)(out). Functionally, NDH-1 shuttles electrons from NADH, via FMN and iron-sulfur (Fe-S) centers, to quinones in the respiratory chain. The immediate electron acceptor for the enzyme in this species is believed to be ubiquinone. Couples the redox reaction to proton translocation (for every two electrons transferred, four hydrogen ions are translocated across the cytoplasmic membrane), and thus conserves the redox energy in a proton gradient. This subunit may bind ubiquinone. The sequence is that of NADH-quinone oxidoreductase subunit H from Sulfurimonas denitrificans (strain ATCC 33889 / DSM 1251) (Thiomicrospira denitrificans (strain ATCC 33889 / DSM 1251)).